We begin with the raw amino-acid sequence, 465 residues long: Putative multidrug resistance protein MdtD (465 aa).

A run of 13 helical transmembrane segments spans residues 12-32 (LWIV…VNTA), 49-69 (SVIV…GWLA), 72-92 (IGVK…SLMC), 102-124 (ILSR…LTVM), 138-158 (FVTL…GFLV), 165-185 (WIFL…LLLM), 195-215 (FDIS…LALD), 219-239 (GLGL…IALG), 267-287 (LVGS…TPIF), 290-310 (IGLG…IIGS), 342-362 (LSLP…VLFF), 393-413 (LLSM…GILL), and 430-450 (SAFL…ALIF).

It belongs to the major facilitator superfamily. TCR/Tet family.

Its subcellular location is the cell inner membrane. This chain is Putative multidrug resistance protein MdtD, found in Yersinia pseudotuberculosis serotype O:1b (strain IP 31758).